The chain runs to 343 residues: Anthranilate phosphoribosyltransferase (343 aa).

Residues G84, 87 to 88 (GD), T92, 94 to 97 (NIST), 112 to 120 (KHGNRGVSS), and S124 contribute to the 5-phospho-alpha-D-ribose 1-diphosphate site. Position 84 (G84) interacts with anthranilate. Residue S96 coordinates Mg(2+). N115 lines the anthranilate pocket. Anthranilate is bound at residue R170. Mg(2+) contacts are provided by D229 and E230.

It belongs to the anthranilate phosphoribosyltransferase family. In terms of assembly, homodimer. It depends on Mg(2+) as a cofactor.

The enzyme catalyses N-(5-phospho-beta-D-ribosyl)anthranilate + diphosphate = 5-phospho-alpha-D-ribose 1-diphosphate + anthranilate. Its pathway is amino-acid biosynthesis; L-tryptophan biosynthesis; L-tryptophan from chorismate: step 2/5. In terms of biological role, catalyzes the transfer of the phosphoribosyl group of 5-phosphorylribose-1-pyrophosphate (PRPP) to anthranilate to yield N-(5'-phosphoribosyl)-anthranilate (PRA). In Burkholderia cenocepacia (strain ATCC BAA-245 / DSM 16553 / LMG 16656 / NCTC 13227 / J2315 / CF5610) (Burkholderia cepacia (strain J2315)), this protein is Anthranilate phosphoribosyltransferase.